The chain runs to 146 residues: UPF0742 protein PB2B2.17c (146 aa).

A helical transmembrane segment spans residues leucine 38–serine 60.

The protein belongs to the UPF0742 family.

The protein localises to the cytoplasm. It is found in the nucleus membrane. The chain is UPF0742 protein PB2B2.17c from Schizosaccharomyces pombe (strain 972 / ATCC 24843) (Fission yeast).